Here is a 249-residue protein sequence, read N- to C-terminus: Ciliogenesis and planar polarity effector 2 (249 aa).

Residues 46–249 (PADVAAYKVF…VIAGLVGGAE (204 aa)) form a small GTPase-like region. Residues 58–65 (GKSGVGKT) and 171–174 (TKLD) each bind GTP.

Belongs to the small GTPase superfamily. Rab family. Interacts with fuz.

The protein localises to the cytoplasm. It is found in the cytoskeleton. It localises to the cilium basal body. Potential effector of the planar cell polarity signaling pathway. Plays a role in targeted membrane trafficking most probably at the level of vesicle fusion with membranes. Involved in cilium biogenesis by regulating the transport of cargo proteins to the basal body and to the apical tips of cilia. More generally involved in exocytosis in secretory cells. In Xenopus laevis (African clawed frog), this protein is Ciliogenesis and planar polarity effector 2.